Consider the following 204-residue polypeptide: dITP/XTP pyrophosphatase (204 aa).

8–13 (SNNAKK) is a substrate binding site. The Mg(2+) site is built by Glu43 and Asp72. Asp72 serves as the catalytic Proton acceptor. Substrate contacts are provided by residues Ser73, 155 to 158 (FGYD), Lys180, and 185 to 186 (HR).

It belongs to the HAM1 NTPase family. Homodimer. Requires Mg(2+) as cofactor.

It carries out the reaction XTP + H2O = XMP + diphosphate + H(+). The catalysed reaction is dITP + H2O = dIMP + diphosphate + H(+). The enzyme catalyses ITP + H2O = IMP + diphosphate + H(+). Its function is as follows. Pyrophosphatase that catalyzes the hydrolysis of nucleoside triphosphates to their monophosphate derivatives, with a high preference for the non-canonical purine nucleotides XTP (xanthosine triphosphate), dITP (deoxyinosine triphosphate) and ITP. Seems to function as a house-cleaning enzyme that removes non-canonical purine nucleotides from the nucleotide pool, thus preventing their incorporation into DNA/RNA and avoiding chromosomal lesions. This chain is dITP/XTP pyrophosphatase, found in Cutibacterium acnes (strain DSM 16379 / KPA171202) (Propionibacterium acnes).